A 245-amino-acid polypeptide reads, in one-letter code: MANEANPCPCDIGHKLEYGGMGHEVQVEHIKAYVTRSPVDAGKAVIVVQDIFGWQLPNTRYMADMIARNGYTTIVPDFFVGQEPWDPAGDWSTFPAWLKSRNARKVNREVDAVLRYLRQQCHAQKIGIVGFCWGGVVVHQVMTAYPDIRAGVSVYGIIRDSEDVYNLKNPTLFIFAENDTVIPLEQVSTLTQKLKEHCIVNYQVKTFSGQTHGFVHRKREDCSPADKPYIEEARRNLIEWLNKYV.

Position 2 is an N-acetylalanine (Ala2). Residues Cys132, Asp179, and His212 contribute to the active site. Ser223 bears the Phosphoserine mark.

It belongs to the dienelactone hydrolase family.

It localises to the cytoplasm. It is found in the cytosol. Functionally, cysteine hydrolase. In Mus musculus (Mouse), this protein is Carboxymethylenebutenolidase homolog (Cmbl).